Reading from the N-terminus, the 189-residue chain is Adenylate kinase homolog MTH_1663 (189 aa).

An ATP-binding site is contributed by 12-20 (GVPGTGKTT).

This sequence belongs to the archaeal adenylate kinase family.

In Methanothermobacter thermautotrophicus (strain ATCC 29096 / DSM 1053 / JCM 10044 / NBRC 100330 / Delta H) (Methanobacterium thermoautotrophicum), this protein is Adenylate kinase homolog MTH_1663.